Consider the following 136-residue polypeptide: Secreted RxLR effector protein 63 (136 aa).

An N-terminal signal peptide occupies residues methionine 1–arginine 21. The short motif at arginine 43–arginine 46 is the RxLR element.

This sequence belongs to the RxLR effector family.

The protein resides in the secreted. It localises to the host nucleus. Functionally, effector that partially suppresses the tobacco programmed cell death induced by cell death-inducing proteins. This chain is Secreted RxLR effector protein 63, found in Plasmopara viticola (Downy mildew of grapevine).